The following is a 587-amino-acid chain: Lamin-B1 (587 aa).

Residues 1-11 (MATATPVQQRA) are compositionally biased toward polar residues. A disordered region spans residues 1-29 (MATATPVQQRAGSRASAPATPFSPTRLSR). The residue at position 2 (alanine 2) is an N-acetylalanine. The tract at residues 2–34 (ATATPVQQRAGSRASAPATPFSPTRLSRLQEKE) is head. Residues threonine 3 and threonine 5 each carry the phosphothreonine modification. The residue at position 14 (arginine 14) is an Omega-N-methylarginine. Position 16 is a phosphoserine (serine 16). Threonine 20 is subject to Phosphothreonine. Serine 23 is modified (phosphoserine). Threonine 25 is modified (phosphothreonine). A Phosphoserine modification is found at serine 28. An IF rod domain is found at 32-388 (EKEELRELND…KLLEGEEERL (357 aa)). The coil 1A stretch occupies residues 35 to 69 (ELRELNDRLAVYIDKVRSLETENSALQLQVTEREE). Positions 70-81 (VRGRELTGLKAL) are linker 1. Residues 82–215 (YETELADARR…EFRKNMYEEE (134 aa)) form a coil 1B region. Lysine 102 is covalently cross-linked (Glycyl lysine isopeptide (Lys-Gly) (interchain with G-Cter in SUMO2)). Position 111 is an N6-acetyllysine (lysine 111). Lysine 123 is covalently cross-linked (Glycyl lysine isopeptide (Lys-Gly) (interchain with G-Cter in SUMO2)). Serine 126 bears the Phosphoserine mark. A Glycyl lysine isopeptide (Lys-Gly) (interchain with G-Cter in SUMO2) cross-link involves residue lysine 145. Lysine 157 is subject to N6-acetyllysine; alternate. Residue lysine 157 forms a Glycyl lysine isopeptide (Lys-Gly) (interchain with G-Cter in SUMO2); alternate linkage. Serine 158 carries the post-translational modification Phosphoserine. A Glycyl lysine isopeptide (Lys-Gly) (interchain with G-Cter in SUMO2) cross-link involves residue lysine 181. Phosphoserine is present on residues serine 200 and serine 232. The linker 2 stretch occupies residues 216–243 (INETRRKHETRLVEVDSGRQIEYEYKLA). Residues lysine 241 and lysine 261 each participate in a glycyl lysine isopeptide (Lys-Gly) (interchain with G-Cter in SUMO2) cross-link. The interval 244–386 (QALHEMREQH…YRKLLEGEEE (143 aa)) is coil 2. Lysine 271 carries the N6-acetyllysine; alternate modification. Lysine 271 is covalently cross-linked (Glycyl lysine isopeptide (Lys-Gly) (interchain with G-Cter in SUMO2); alternate). 2 positions are modified to phosphoserine: serine 278 and serine 302. Lysine 312 is covalently cross-linked (Glycyl lysine isopeptide (Lys-Gly) (interchain with G-Cter in SUMO2)). Position 330 is an N6-acetyllysine; alternate (lysine 330). A Glycyl lysine isopeptide (Lys-Gly) (interchain with G-Cter in SUMO2); alternate cross-link involves residue lysine 330. A phosphoserine mark is found at serine 375 and serine 393. The tract at residues 387–587 (RLKLSPSPSS…RASNKSCAIM (201 aa)) is tail. Low complexity predominate over residues 390–409 (LSPSPSSRVTVSRASSSRSV). Residues 390-432 (LSPSPSSRVTVSRASSSRSVRTTRGKRKRVDVEESEASSSVSI) form a disordered region. Threonine 399 is a glycosylation site (O-linked (GlcNAc) threonine). Residue arginine 413 is modified to Omega-N-methylarginine. A Nuclear localization signal motif is present at residues 415-420 (KRKRVD). The region spanning 430–546 (VSISHSASAT…EEVAQRSTVF (117 aa)) is the LTD domain. Lysine 483 carries the post-translational modification N6-acetyllysine. Lysine 532 is covalently cross-linked (Glycyl lysine isopeptide (Lys-Gly) (interchain with G-Cter in SUMO2)). The residue at position 534 (serine 534) is a Phosphoserine. Lysine 547 is covalently cross-linked (Glycyl lysine isopeptide (Lys-Gly) (interchain with G-Cter in SUMO2)). The interval 550–587 (IPEEEEEEEEEPIGVPLEEERFHQQGTPRASNKSCAIM) is disordered. Residues 551–561 (PEEEEEEEEEP) show a composition bias toward acidic residues. The segment covering 573–587 (QQGTPRASNKSCAIM) has biased composition (polar residues). A Phosphothreonine modification is found at threonine 576. Cysteine 584 is modified (cysteine methyl ester). Residue cysteine 584 is the site of S-farnesyl cysteine attachment. A propeptide spans 585-587 (AIM) (removed in mature form).

It belongs to the intermediate filament family. As to quaternary structure, homodimer. Lamin dimers then assemble into dimeric head-to-tail polymers. Ultimately, two head-to-tail polymers assemble laterally into a protofilament with a uniformly shaped rod of 3.5 nm in diameter. Interacts with SPAG4 and SEPT12. Post-translationally, B-type lamins undergo a series of modifications, such as farnesylation and phosphorylation. Increased phosphorylation of the lamins occurs before envelope disintegration and probably plays a role in regulating lamin associations. Phosphorylation plays a key role in lamin organization, subcellular localization and nuclear envelope disintegration. Phosphorylation by CDK1 at Ser-23 and Ser-393 at the onset of mitosis drives lamin disassembly and nuclear envelope breakdown.

The protein resides in the nucleus lamina. Functionally, lamins are intermediate filament proteins that assemble into a filamentous meshwork, and which constitute the major components of the nuclear lamina, a fibrous layer on the nucleoplasmic side of the inner nuclear membrane. Lamins provide a framework for the nuclear envelope, bridging the nuclear envelope and chromatin, thereby playing an important role in nuclear assembly, chromatin organization, nuclear membrane and telomere dynamics. The structural integrity of the lamina is strictly controlled by the cell cycle, as seen by the disintegration and formation of the nuclear envelope in prophase and telophase, respectively. This Rattus norvegicus (Rat) protein is Lamin-B1 (Lmnb1).